The following is a 211-amino-acid chain: Thymidylate kinase (211 aa).

10–17 is an ATP binding site; it reads GPDGAGKT.

The protein belongs to the thymidylate kinase family.

The enzyme catalyses dTMP + ATP = dTDP + ADP. Functionally, phosphorylation of dTMP to form dTDP in both de novo and salvage pathways of dTTP synthesis. This Lactococcus lactis subsp. cremoris (strain SK11) protein is Thymidylate kinase.